A 129-amino-acid polypeptide reads, in one-letter code: Fluoride-specific ion channel FluC (129 aa).

4 helical membrane-spanning segments follow: residues 10–30, 35–55, 71–91, and 105–125; these read LLVG…ALAF, PGFP…IGFL, LFLV…MFEG, and LYLA…IIAA. Residues Gly79 and Thr82 each contribute to the Na(+) site.

The protein belongs to the fluoride channel Fluc/FEX (TC 1.A.43) family.

It localises to the cell inner membrane. It carries out the reaction fluoride(in) = fluoride(out). With respect to regulation, na(+) is not transported, but it plays an essential structural role and its presence is essential for fluoride channel function. Its function is as follows. Fluoride-specific ion channel. Important for reducing fluoride concentration in the cell, thus reducing its toxicity. The chain is Fluoride-specific ion channel FluC from Chlorobium luteolum (strain DSM 273 / BCRC 81028 / 2530) (Pelodictyon luteolum).